A 485-amino-acid chain; its full sequence is Glutamyl-tRNA(Gln) amidotransferase subunit A (485 aa).

Catalysis depends on charge relay system residues lysine 78 and serine 153. Serine 177 (acyl-ester intermediate) is an active-site residue.

Belongs to the amidase family. GatA subfamily. Heterotrimer of A, B and C subunits.

It catalyses the reaction L-glutamyl-tRNA(Gln) + L-glutamine + ATP + H2O = L-glutaminyl-tRNA(Gln) + L-glutamate + ADP + phosphate + H(+). Allows the formation of correctly charged Gln-tRNA(Gln) through the transamidation of misacylated Glu-tRNA(Gln) in organisms which lack glutaminyl-tRNA synthetase. The reaction takes place in the presence of glutamine and ATP through an activated gamma-phospho-Glu-tRNA(Gln). In Geotalea daltonii (strain DSM 22248 / JCM 15807 / FRC-32) (Geobacter daltonii), this protein is Glutamyl-tRNA(Gln) amidotransferase subunit A.